A 127-amino-acid polypeptide reads, in one-letter code: Histone H2B type 1-A (127 aa).

The disordered stretch occupies residues 1–36; that stretch reads MPEVSSKGATISKKGFKKAVVKTQKKEGKKRKRTRK. Position 2 is an N-acetylproline (proline 2). 7 positions are modified to N6-acetyllysine; alternate: lysine 7, lysine 13, lysine 14, lysine 17, lysine 18, lysine 22, and lysine 25. 8 positions are modified to N6-crotonyllysine; alternate: lysine 7, lysine 13, lysine 14, lysine 17, lysine 18, lysine 22, lysine 25, and lysine 36. N6-lactoyllysine; alternate occurs at positions 7 and 13. Residue lysine 7 forms a Glycyl lysine isopeptide (Lys-Gly) (interchain with G-Cter in SUMO2); alternate linkage. N6-lactoyllysine; alternate is present on residues lysine 17, lysine 18, lysine 22, and lysine 25. Lysine 22 participates in a covalent cross-link: Glycyl lysine isopeptide (Lys-Gly) (interchain with G-Cter in SUMO2); alternate. Lysine 36 bears the N6-succinyllysine; alternate mark. Residue lysine 36 forms a Glycyl lysine isopeptide (Lys-Gly) (interchain with G-Cter in ubiquitin); alternate linkage. At serine 38 the chain carries Phosphoserine. At lysine 45 the chain carries N6-lactoyllysine; alternate. Residue lysine 48 is modified to N6-methyllysine. The residue at position 59 (lysine 59) is an N6,N6-dimethyllysine. The residue at position 81 (arginine 81) is a Dimethylated arginine. Serine 86 bears the Phosphoserine mark. Position 87 is an N6-acetyllysine; alternate (lysine 87). At lysine 87 the chain carries N6-lactoyllysine; alternate. Residue lysine 87 is modified to N6,N6,N6-trimethyllysine; alternate. Omega-N-methylarginine is present on residues arginine 88 and arginine 94. Lysine 110 carries the N6-lactoyllysine; alternate modification. Lysine 110 carries the post-translational modification N6-methyllysine. Phosphothreonine is present on threonine 117. An N6-lactoyllysine; alternate mark is found at lysine 118 and lysine 122. N6-succinyllysine; alternate occurs at positions 118 and 122. At lysine 118 the chain carries N6-methylated lysine; alternate. Residue lysine 122 forms a Glycyl lysine isopeptide (Lys-Gly) (interchain with G-Cter in ubiquitin); alternate linkage.

Belongs to the histone H2B family. In terms of assembly, the nucleosome is a histone octamer containing two molecules each of H2A, H2B, H3 and H4 assembled in one H3-H4 heterotetramer and two H2A-H2B heterodimers. In terms of processing, monoubiquitination at Lys-36 (H2BK34Ub) by the MSL1/MSL2 dimer is required for histone H3 'Lys-4' (H3K4me) and 'Lys-79' (H3K79me) methylation and transcription activation at specific gene loci, such as HOXA9 and MEIS1 loci. Similarly, monoubiquitination at Lys-122 (H2BK120Ub) by the RNF20/40 complex gives a specific tag for epigenetic transcriptional activation and is also prerequisite for histone H3 'Lys-4' and 'Lys-79' methylation. It also functions cooperatively with the FACT dimer to stimulate elongation by RNA polymerase II. H2BK120Ub also acts as a regulator of mRNA splicing: deubiquitination by USP49 is required for efficient cotranscriptional splicing of a large set of exons. Post-translationally, crotonylation (Kcr) is specifically present in male germ cells and marks testis-specific genes in post-meiotic cells, including X-linked genes that escape sex chromosome inactivation in haploid cells. Crotonylation marks active promoters and enhancers and confers resistance to transcriptional repressors. It is also associated with post-meiotically activated genes on autosomes. Acetylated during spermatogenesis. Acetylated form is most abundant in spermatogonia compared to spermatocytes and round spermatids. In terms of processing, phosphorylated at Thr-117 in spermatogonia, spermatocytes and round spermatids. Post-translationally, methylated at Lys-118 in spermatogonia, spermatocytes and round spermatids. Lactylated in macrophages by EP300/P300 by using lactoyl-CoA directly derived from endogenous or exogenous lactate, leading to stimulates gene transcription. Mainly expressed in testis, and the corresponding protein is also present in mature sperm (at protein level). Also found in some fat cells.

The protein resides in the nucleus. Its subcellular location is the chromosome. Its function is as follows. Variant histone specifically required to direct the transformation of dissociating nucleosomes to protamine in male germ cells. Entirely replaces classical histone H2B prior nucleosome to protamine transition and probably acts as a nucleosome dissociating factor that creates a more dynamic chromatin, facilitating the large-scale exchange of histones. Core component of nucleosome. Nucleosomes wrap and compact DNA into chromatin, limiting DNA accessibility to the cellular machineries which require DNA as a template. Histones thereby play a central role in transcription regulation, DNA repair, DNA replication and chromosomal stability. DNA accessibility is regulated via a complex set of post-translational modifications of histones, also called histone code, and nucleosome remodeling. Also found in fat cells, its function and the presence of post-translational modifications specific to such cells are still unclear. In Homo sapiens (Human), this protein is Histone H2B type 1-A.